A 365-amino-acid polypeptide reads, in one-letter code: Sulfate/thiosulfate import ATP-binding protein CysA (365 aa).

One can recognise an ABC transporter domain in the interval 3 to 237; the sequence is IEIARIKKSF…PATRFVLEFM (235 aa). 35-42 provides a ligand contact to ATP; the sequence is GPSGSGKT.

This sequence belongs to the ABC transporter superfamily. Sulfate/tungstate importer (TC 3.A.1.6) family. The complex is composed of two ATP-binding proteins (CysA), two transmembrane proteins (CysT and CysW) and a solute-binding protein (CysP).

It localises to the cell inner membrane. The enzyme catalyses sulfate(out) + ATP + H2O = sulfate(in) + ADP + phosphate + H(+). It catalyses the reaction thiosulfate(out) + ATP + H2O = thiosulfate(in) + ADP + phosphate + H(+). Its function is as follows. Part of the ABC transporter complex CysAWTP involved in sulfate/thiosulfate import. Responsible for energy coupling to the transport system. This Salmonella typhimurium (strain LT2 / SGSC1412 / ATCC 700720) protein is Sulfate/thiosulfate import ATP-binding protein CysA.